Here is a 482-residue protein sequence, read N- to C-terminus: GTPase Obg (482 aa).

The Obg domain maps to 2 to 159 (PRFIDRVVVH…RELTLELKTV (158 aa)). Residues 160–341 (ADVGLVGFPS…LIFALWDMVA (182 aa)) enclose the OBG-type G domain. GTP-binding positions include 166-173 (GFPSAGKS), 191-195 (FTTLA), 212-215 (DVPG), 292-295 (NKID), and 322-324 (STV). The Mg(2+) site is built by Ser173 and Thr193. The region spanning 359–437 (PIPVDETAFS…IGDMTFDWEP (79 aa)) is the OCT domain. The interval 450 to 482 (RGTDVRLEQTDRVGADERKAARKARRQSDDGEE) is disordered. Over residues 452–468 (TDVRLEQTDRVGADERK) the composition is skewed to basic and acidic residues.

This sequence belongs to the TRAFAC class OBG-HflX-like GTPase superfamily. OBG GTPase family. Monomer. Mg(2+) is required as a cofactor.

It is found in the cytoplasm. In terms of biological role, an essential GTPase which binds GTP, GDP and possibly (p)ppGpp with moderate affinity, with high nucleotide exchange rates and a fairly low GTP hydrolysis rate. Plays a role in control of the cell cycle, stress response, ribosome biogenesis and in those bacteria that undergo differentiation, in morphogenesis control. This is GTPase Obg from Mycolicibacterium gilvum (strain PYR-GCK) (Mycobacterium gilvum (strain PYR-GCK)).